Here is a 161-residue protein sequence, read N- to C-terminus: Nucleotide-binding protein Ssed_3443 (161 aa).

Belongs to the YajQ family.

In terms of biological role, nucleotide-binding protein. The protein is Nucleotide-binding protein Ssed_3443 of Shewanella sediminis (strain HAW-EB3).